A 149-amino-acid chain; its full sequence is Protein-export protein SecB (149 aa).

Belongs to the SecB family. As to quaternary structure, homotetramer, a dimer of dimers. One homotetramer interacts with 1 SecA dimer.

The protein resides in the cytoplasm. Its function is as follows. One of the proteins required for the normal export of preproteins out of the cell cytoplasm. It is a molecular chaperone that binds to a subset of precursor proteins, maintaining them in a translocation-competent state. It also specifically binds to its receptor SecA. In Hydrogenovibrio crunogenus (strain DSM 25203 / XCL-2) (Thiomicrospira crunogena), this protein is Protein-export protein SecB.